The sequence spans 843 residues: F-box only protein 11 (843 aa).

A disordered region spans residues 1-63 (MVAEESGPGA…RVSGKSQDLS (63 aa)). The segment covering 30-45 (PTKNSMEGASTSTTEN) has biased composition (polar residues). An F-box domain is found at 69 to 115 (QYLQEKLPDEVVLKIFSYLLEQDLCRAACVCKRFSELANDPILWKRL). PbH1 repeat units lie at residues 311–333 (GACPTIKHCNISDCENVGLYITD), 334–356 (HAQGIYEDNEISNNALAGIWVKN), 357–379 (HGNPIIRRNHIHHGRDVGVFTFD), 380–402 (HGMGYFESCNIHRNRIAGFEVKA), 403–425 (YANPTVVRCEIHHGQTGGIYVHE), 426–448 (KGRGQFIENKIYANNFAGVWITS), 449–471 (NSDPTIRGNSIFNGNQGGVYIFG), 472–494 (DGRGLIEGNDIYGNALAGIQIRT), 495–517 (NSCPIVRHNKIHDGQHGGIYVHE), 518–540 (KGQGVIEENEVYSNTLAGVWVTT), 541–563 (GSTPVLRRNRIHSGKQVGVYFYD), 564–586 (NGHGVLEDNDIYNHMYSGVQIRT), 587–609 (GSNPKIRRNKIWGGQNGGILVYN), 610–632 (SGLGCIEDNEIFDNAMAGVWIKT), 633–655 (DSNPTLRRNKIHDGRDGGICIFN), 656–678 (GGRGLLEENDIFRNAQAGVLIST), 679–701 (NSHPVLRKNRIFDGFAAGIEITN), 702–724 (HATATLEGNQIFNNRFGGLFLAS), and 725–746 (GVNVTMKDNKIMNNQDAIEKAV). A UBR-type zinc finger spans residues 749–820 (GQCLYKISSY…LSNPCTLAGE (72 aa)).

In terms of assembly, component of the SCF(FBXO11) complex consisting of CUL1, RBX1, SKP1 and FBXO11. Interacts with CIITA.

It localises to the nucleus. The protein resides in the chromosome. Its pathway is protein modification; protein ubiquitination. Functionally, substrate recognition component of a SCF (SKP1-CUL1-F-box protein) E3 ubiquitin-protein ligase complex which mediates the ubiquitination and subsequent proteasomal degradation of target proteins, such as DTL/CDT2, BCL6, SNAI1 and PRDM1/BLIMP1. The SCF(FBXO11) complex mediates ubiquitination and degradation of BCL6, thereby playing a role in the germinal center B-cells terminal differentiation toward memory B-cells and plasma cells. The SCF(FBXO11) complex also mediates ubiquitination and degradation of DTL, an important step for the regulation of TGF-beta signaling, cell migration and the timing of the cell-cycle progression and exit. The SCF(FBXO11) complex also catalyzes ubiquitination and degradation of GSK3B-phosphorylated SNAI1. Binds to and neddylates phosphorylated p53/TP53, inhibiting its transcriptional activity. Plays a role in the regulatiom of erythropoiesis but not myelopoiesis or megakaryopoiesis. Mechanistically, activates erythroid genes by mediating the degradation of BAHD1, a heterochromatin-associated protein that recruits corepressors to H3K27me3 marks. Participates in macrophage cell death and inflammation in response to bacterial toxins by regulating the expression of complement 5a receptor 1/C5AR1 and IL-1beta. Acts as a critical regulator to determine the level of MHC-II by mediating the recognition of degron at the P/S/T domain of CIITA leading to its ubiquitination and subsequent degradation via the proteasome. Participates in the antiviral repsonse by initiating the activation of TBK1-IRF3-IFN-I axis. Mediates the 'Lys-63'-linked ubiquitination of TRAF3 to strengthen the interaction between TRAF3 and TBK1. In Rattus norvegicus (Rat), this protein is F-box only protein 11 (Fbxo11).